Here is a 375-residue protein sequence, read N- to C-terminus: Chaperone protein DnaJ (375 aa).

Residues Asp5–Gly70 enclose the J domain. The CR-type zinc-finger motif lies at Gly135–Thr213. Zn(2+) contacts are provided by Cys148, Cys151, Cys165, Cys168, Cys187, Cys190, Cys201, and Cys204. 4 CXXCXGXG motif repeats span residues Cys148–Gly155, Cys165–Gly172, Cys187–Gly194, and Cys201–Gly208.

This sequence belongs to the DnaJ family. Homodimer. The cofactor is Zn(2+).

Its subcellular location is the cytoplasm. In terms of biological role, participates actively in the response to hyperosmotic and heat shock by preventing the aggregation of stress-denatured proteins and by disaggregating proteins, also in an autonomous, DnaK-independent fashion. Unfolded proteins bind initially to DnaJ; upon interaction with the DnaJ-bound protein, DnaK hydrolyzes its bound ATP, resulting in the formation of a stable complex. GrpE releases ADP from DnaK; ATP binding to DnaK triggers the release of the substrate protein, thus completing the reaction cycle. Several rounds of ATP-dependent interactions between DnaJ, DnaK and GrpE are required for fully efficient folding. Also involved, together with DnaK and GrpE, in the DNA replication of plasmids through activation of initiation proteins. The protein is Chaperone protein DnaJ of Chromobacterium violaceum (strain ATCC 12472 / DSM 30191 / JCM 1249 / CCUG 213 / NBRC 12614 / NCIMB 9131 / NCTC 9757 / MK).